Consider the following 96-residue polypeptide: Large ribosomal subunit protein bL25 (96 aa).

This sequence belongs to the bacterial ribosomal protein bL25 family. In terms of assembly, part of the 50S ribosomal subunit; part of the 5S rRNA/L5/L18/L25 subcomplex. Contacts the 5S rRNA. Binds to the 5S rRNA independently of L5 and L18.

This is one of the proteins that binds to the 5S RNA in the ribosome where it forms part of the central protuberance. The chain is Large ribosomal subunit protein bL25 from Francisella tularensis subsp. tularensis (strain FSC 198).